We begin with the raw amino-acid sequence, 113 residues long: Hydrogenase maturation factor HybF (113 aa).

Ni(2+)-binding residues include His2 and Glu3. Residues Cys73, Cys76, Cys89, and Cys92 each coordinate Zn(2+).

It belongs to the HypA/HybF family. HybF subfamily.

Functionally, involved in the maturation of [NiFe] hydrogenases. Required for nickel insertion into the metal center of the hydrogenase. The polypeptide is Hydrogenase maturation factor HybF (Proteus vulgaris).